The following is a 2646-amino-acid chain: Probable inactive serine/threonine-protein kinase roco10 (2646 aa).

7 disordered regions span residues 28-122, 138-168, 205-248, 281-457, 477-516, 605-656, and 882-907; these read LNYS…LSGG, NIPIPPVPTSPTSTPPNLQTNNNNKQDKDKD, PLFI…VSPS, QQQR…VKQA, MSKLVSQSKEQYKTPSSPYQQSTSSSISSGSGTISGHTSP, TSPN…PHQY, and QSSSSSSSSSISNSSSASSSSSSTPS. Polar residues predominate over residues 46 to 56; that stretch reads PQQNLLENDTL. 3 stretches are compositionally biased toward low complexity: residues 78-115, 147-161, and 215-228; these read IITTTTTTTTTTAMSPVATTTTSSPTISASPTYITSPS, SPTSTPPNLQTNNNN, and SRNNNGKRNSGGNK. The segment covering 235 to 248 has biased composition (polar residues); that stretch reads KISSTSAAGDVSPS. Composition is skewed to low complexity over residues 285 to 297 and 325 to 334; these read NGNNNNNNNNNNN and NNNNNNNNNN. Residues 335 to 345 show a composition bias toward polar residues; sequence KQPQHPMNGNH. Residues 346–394 are compositionally biased toward low complexity; that stretch reads SPSNGTSGSLSMSGSGIDNGGNNNNNSNTHGSSSNQSSGVTSPIIQSTS. 2 stretches are compositionally biased toward polar residues: residues 402 to 416 and 428 to 443; these read GLNSDSQMPLSSSPT and TSASAVSSQNRSPLMN. Low complexity-rich tracts occupy residues 444–454, 491–516, 605–627, 634–651, and 883–907; these read STGVSSSSSGV, PSSPYQQSTSSSISSGSGTISGHTSP, TSPNLSSSLSSSSSSGSSGNSSP, QQQQQPQPTTTTTTNTNT, and SSSSSSSSSISNSSSASSSSSSTPS. The 223-residue stretch at 585 to 807 folds into the Rho-GAP domain; it reads SSISPISTAA…MFIQQADILF (223 aa). LRR repeat units follow at residues 968–987, 989–1011, 1012–1033, 1040–1061, 1062–1083, 1085–1108, 1109–1131, 1132–1154, 1155–1176, 1178–1199, 1201–1222, 1224–1247, 1248–1270, 1271–1298, and 1303–1327; these read QKLDMFSLELESLPNEIKQL, DLQELNLNRNKFKLLPGDLARLT, SLRTICIEENNLTEISSEMADF, NLENVTLSSNRLVVLPPLYTWL, KLKTLNISNNYLTKLPIDIFQI, TLEVLRVSNNDLDDNGIPKICTST, KLRSLDLRKNHLTSIPEGIINLV, ELQVLTLADNQISHLTSDIQKLT, SLTELNLNGNQIQSLPPQLLLL, NLKKLYLDNNQLQSISSAIHRM, SLIELRLTNNNISRLPPGIVAL, KLNSLELTGNKPLKDNIPEKYIQK, GKEGIFSFFSETMRTNVPCYRTR, IIMLGDKSTGKSNLIKCLKKLPKSSFSS, and LPSLNNLNSNNSNNSGNSKTNILDI. One can recognise a Roc domain in the interval 1262–1474; the sequence is TNVPCYRTRI…RDIKQMIAKN (213 aa). 3 disordered regions span residues 1293–1317, 1651–1670, and 1957–2026; these read KSSFSSSSSNLPSLNNLNSNNSNNS, NNNNSNGNNVGRGRSGSRSM, and NNSS…KEKE. Low complexity predominate over residues 1651-1669; that stretch reads NNNNSNGNNVGRGRSGSRS. Over residues 1966-1975 the composition is skewed to polar residues; sequence PIASSRSNPK. The segment covering 1983–1996 has biased composition (low complexity); that stretch reads NLIQSNNNDNNNSL. Over residues 1997–2026 the composition is skewed to basic and acidic residues; sequence SKKDLKELAKQNKEKEKEKEKDKDKEKEKE. In terms of domain architecture, Protein kinase spans 2049–2342; the sequence is FSICHFIKEI…PSKIISQLYT (294 aa). ATP contacts are provided by residues 2055-2063 and Lys2094; that span reads IKEIDYREI. An RGS domain is found at 2412–2536; sequence MVVLNNKQST…FTVPTTNKNG (125 aa).

The protein belongs to the protein kinase superfamily. TKL Ser/Thr protein kinase family. ROCO subfamily.

The protein is Probable inactive serine/threonine-protein kinase roco10 (roco10) of Dictyostelium discoideum (Social amoeba).